The primary structure comprises 263 residues: HTH-type transcriptional repressor NanR (263 aa).

The disordered stretch occupies residues 1 to 24; the sequence is MSPMNAFDSQTEDSSPAIGRNLRS. The HTH gntR-type domain maps to 30 to 98; the sequence is KKLSEMVEEE…NGERARVSRP (69 aa). Residues 58–77 constitute a DNA-binding region (H-T-H motif); it reads ERELMAFFNVGRPSVREALA.

The protein belongs to the NanR family.

In terms of biological role, transcriptional repressor that controls expression of the genes required for the catabolism of sialic acids. In Escherichia coli O127:H6 (strain E2348/69 / EPEC), this protein is HTH-type transcriptional repressor NanR.